Here is a 426-residue protein sequence, read N- to C-terminus: MAKQIQAIRGMNDILPTQSPLWQKMEAVLRSSVSAYGYSEIRTPIVENTDLFKRSIGEVTDIVEKEMYTFADNNGDSLTLRPEGTASTVRAGNENGLLYNQEQRLWYMGPMFRHERPQKGRYRQFNQFGVEVYGIGTADIDAEVLMLSARLWEKLGISDHVSLELNTLGDPAERAVYRDALIAFLEQHKDALDEDSKRRMYSNPLRVLDSKDQNVQAILAGAPELMDFLGEESKTHFSQLRELLDAVGIKYTINPRLVRGLDYYNRTVFEWVTSSLGSQGTVLAGGRYDGLVAQLGGKDTPAVGFAMGLERIVLLLETLELNKDIPSEVDVYVTAMGDSCLVEAIKIAQELRSALPNLKVMSHCGGGNVKKQMKRADKSGASVALLIGEDELAEGMVTVKHLRNDIEQQRVARSALGAFLAELAIK.

It belongs to the class-II aminoacyl-tRNA synthetase family. In terms of assembly, homodimer.

The protein localises to the cytoplasm. The enzyme catalyses tRNA(His) + L-histidine + ATP = L-histidyl-tRNA(His) + AMP + diphosphate + H(+). This Shewanella baltica (strain OS195) protein is Histidine--tRNA ligase.